Consider the following 642-residue polypeptide: Chaperone protein DnaK (642 aa).

The residue at position 196 (threonine 196) is a Phosphothreonine; by autocatalysis. Positions 593-603 (STMYQTPSGDT) are enriched in polar residues. A disordered region spans residues 593-642 (STMYQTPSGDTPPSEPETGASEESKGGDKTQGDGEVDAEYEVIDGNDKDK). Positions 614–624 (EESKGGDKTQG) are enriched in basic and acidic residues. Positions 626–636 (GEVDAEYEVID) are enriched in acidic residues.

Belongs to the heat shock protein 70 family.

Its function is as follows. Acts as a chaperone. The sequence is that of Chaperone protein DnaK from Chlorobium phaeobacteroides (strain BS1).